Reading from the N-terminus, the 668-residue chain is UvrABC system protein B (668 aa).

The region spanning 31 to 188 (HGIEAGEKAQ…RKLVNIQFER (158 aa)) is the Helicase ATP-binding domain. 44–51 (GATGTGKT) is an ATP binding site. The Beta-hairpin signature appears at 97-120 (YYDYYQPEAYVPSSDTYIEKDSSI). Positions 435–601 (QMDDLVGEIN…TIIKPIRDLI (167 aa)) constitute a Helicase C-terminal domain. The region spanning 630-665 (EKLIARLEDEMRAAAKKLDFEQAASLRDTIMDMKTE) is the UVR domain.

Belongs to the UvrB family. As to quaternary structure, forms a heterotetramer with UvrA during the search for lesions. Interacts with UvrC in an incision complex.

The protein resides in the cytoplasm. In terms of biological role, the UvrABC repair system catalyzes the recognition and processing of DNA lesions. A damage recognition complex composed of 2 UvrA and 2 UvrB subunits scans DNA for abnormalities. Upon binding of the UvrA(2)B(2) complex to a putative damaged site, the DNA wraps around one UvrB monomer. DNA wrap is dependent on ATP binding by UvrB and probably causes local melting of the DNA helix, facilitating insertion of UvrB beta-hairpin between the DNA strands. Then UvrB probes one DNA strand for the presence of a lesion. If a lesion is found the UvrA subunits dissociate and the UvrB-DNA preincision complex is formed. This complex is subsequently bound by UvrC and the second UvrB is released. If no lesion is found, the DNA wraps around the other UvrB subunit that will check the other stand for damage. The protein is UvrABC system protein B of Levilactobacillus brevis (strain ATCC 367 / BCRC 12310 / CIP 105137 / JCM 1170 / LMG 11437 / NCIMB 947 / NCTC 947) (Lactobacillus brevis).